The sequence spans 98 residues: MLSISININLAFAAALLGMLMFRSHMMSSLLCLEGMMLSMFILSTLIILNMQFTMSFTMPILLLVFAACEAAIGLALLVMVSNNYGLDYIQNLNLLQC.

The next 3 helical transmembrane spans lie at 2 to 22 (LSISININLAFAAALLGMLMF), 29 to 49 (SLLCLEGMMLSMFILSTLIIL), and 61 to 81 (ILLLVFAACEAAIGLALLVMV).

Belongs to the complex I subunit 4L family. In terms of assembly, core subunit of respiratory chain NADH dehydrogenase (Complex I) which is composed of 45 different subunits.

The protein localises to the mitochondrion inner membrane. It catalyses the reaction a ubiquinone + NADH + 5 H(+)(in) = a ubiquinol + NAD(+) + 4 H(+)(out). Core subunit of the mitochondrial membrane respiratory chain NADH dehydrogenase (Complex I) which catalyzes electron transfer from NADH through the respiratory chain, using ubiquinone as an electron acceptor. Part of the enzyme membrane arm which is embedded in the lipid bilayer and involved in proton translocation. The sequence is that of NADH-ubiquinone oxidoreductase chain 4L (MT-ND4L) from Microcebus ravelobensis (Golden-brown mouse lemur).